The following is a 305-amino-acid chain: Probable lipid kinase YegS-like (305 aa).

The DAGKc domain maps to 2-134 (HPPAPALLII…DLAKVNDQRY (133 aa)). ATP contacts are provided by residues Thr40, 66 to 72 (GDGTINE), and Thr95. 3 residues coordinate Mg(2+): Leu215, Asp218, and Leu220. Glu271 acts as the Proton acceptor in catalysis.

Belongs to the diacylglycerol/lipid kinase family. YegS lipid kinase subfamily. The cofactor is Mg(2+). Requires Ca(2+) as cofactor.

The protein localises to the cytoplasm. In terms of biological role, probably phosphorylates lipids; the in vivo substrate is unknown. This Serratia proteamaculans (strain 568) protein is Probable lipid kinase YegS-like.